A 317-amino-acid chain; its full sequence is MRILLANPRGFCAGVDRAISIVERALAIYGAPIYVRHEVVHNRFVVNDLRERGAVFIEEISEVPDGAILIFSAHGVSQAVRAEAKARHLTMLFDATCPLVTKVHMEVARASRRGTEAILIGHAGHPEVEGTMGQYSNPQGGMYLVESPQDVWQLQVKDEQNLCFMTQTTLSVDDTSEVIDALRARFPAIVGPRKDDICYATTNRQEAVRSLAVQADVVLVVGSKNSSNSNRLAELARRAGRAAYLIDSASDIDDAWLSGVGCVGVTAGASAPDVLVREVIDRLQALGGAAAQEIQGREENIVFEVPRELRIEVQQAD.

Cysteine 12 provides a ligand contact to [4Fe-4S] cluster. (2E)-4-hydroxy-3-methylbut-2-enyl diphosphate contacts are provided by histidine 41 and histidine 74. Positions 41 and 74 each coordinate dimethylallyl diphosphate. Isopentenyl diphosphate contacts are provided by histidine 41 and histidine 74. Cysteine 97 serves as a coordination point for [4Fe-4S] cluster. Histidine 125 contacts (2E)-4-hydroxy-3-methylbut-2-enyl diphosphate. Histidine 125 lines the dimethylallyl diphosphate pocket. Histidine 125 lines the isopentenyl diphosphate pocket. Glutamate 127 acts as the Proton donor in catalysis. Residue threonine 168 participates in (2E)-4-hydroxy-3-methylbut-2-enyl diphosphate binding. Cysteine 198 is a [4Fe-4S] cluster binding site. Positions 226, 227, 228, and 270 each coordinate (2E)-4-hydroxy-3-methylbut-2-enyl diphosphate. Dimethylallyl diphosphate contacts are provided by serine 226, serine 227, asparagine 228, and serine 270. Serine 226, serine 227, asparagine 228, and serine 270 together coordinate isopentenyl diphosphate.

It belongs to the IspH family. In terms of assembly, homodimer. It depends on [4Fe-4S] cluster as a cofactor.

The enzyme catalyses isopentenyl diphosphate + 2 oxidized [2Fe-2S]-[ferredoxin] + H2O = (2E)-4-hydroxy-3-methylbut-2-enyl diphosphate + 2 reduced [2Fe-2S]-[ferredoxin] + 2 H(+). The catalysed reaction is dimethylallyl diphosphate + 2 oxidized [2Fe-2S]-[ferredoxin] + H2O = (2E)-4-hydroxy-3-methylbut-2-enyl diphosphate + 2 reduced [2Fe-2S]-[ferredoxin] + 2 H(+). It participates in isoprenoid biosynthesis; dimethylallyl diphosphate biosynthesis; dimethylallyl diphosphate from (2E)-4-hydroxy-3-methylbutenyl diphosphate: step 1/1. It functions in the pathway isoprenoid biosynthesis; isopentenyl diphosphate biosynthesis via DXP pathway; isopentenyl diphosphate from 1-deoxy-D-xylulose 5-phosphate: step 6/6. Its function is as follows. Catalyzes the conversion of 1-hydroxy-2-methyl-2-(E)-butenyl 4-diphosphate (HMBPP) into a mixture of isopentenyl diphosphate (IPP) and dimethylallyl diphosphate (DMAPP). Acts in the terminal step of the DOXP/MEP pathway for isoprenoid precursor biosynthesis. This Edwardsiella ictaluri (strain 93-146) protein is 4-hydroxy-3-methylbut-2-enyl diphosphate reductase.